The primary structure comprises 257 residues: Kallikrein-1 (257 aa).

Residues Met-1–Ala-18 form the signal peptide. Residues Pro-19–Arg-24 constitute a propeptide, activation peptide. Positions Ile-25 to Ala-254 constitute a Peptidase S1 domain. Cystine bridges form between Cys-31/Cys-169, Cys-47/Cys-63, Cys-148/Cys-215, Cys-180/Cys-194, and Cys-205/Cys-230. Residue His-62 is the Charge relay system of the active site. Residue Ser-90 is glycosylated (O-linked (GalNAc...) serine). Asn-99 carries an N-linked (GlcNAc...) asparagine glycan. A glycan (O-linked (GalNAc...) serine) is linked at Ser-101. The N-linked (GlcNAc...) asparagine glycan is linked to Asn-105. The active-site Charge relay system is the Asp-116. The N-linked (GlcNAc...) asparagine glycan is linked to Asn-160. Ser-162 carries O-linked (GalNAc...) serine glycosylation. Ser-209 serves as the catalytic Charge relay system.

This sequence belongs to the peptidase S1 family. Kallikrein subfamily.

The catalysed reaction is Preferential cleavage of Arg-|-Xaa bonds in small molecule substrates. Highly selective action to release kallidin (lysyl-bradykinin) from kininogen involves hydrolysis of Met-|-Xaa or Leu-|-Xaa.. In terms of biological role, glandular kallikreins cleave Met-Lys and Arg-Ser bonds in kininogen to release Lys-bradykinin. This Macaca fascicularis (Crab-eating macaque) protein is Kallikrein-1 (KLK1).